A 133-amino-acid chain; its full sequence is Small ribosomal subunit protein uS8 (133 aa).

This sequence belongs to the universal ribosomal protein uS8 family. As to quaternary structure, part of the 30S ribosomal subunit. Contacts proteins S5 and S12.

One of the primary rRNA binding proteins, it binds directly to 16S rRNA central domain where it helps coordinate assembly of the platform of the 30S subunit. This chain is Small ribosomal subunit protein uS8, found in Prochlorococcus marinus (strain MIT 9215).